We begin with the raw amino-acid sequence, 173 residues long: Large ribosomal subunit protein bL9 (173 aa).

It belongs to the bacterial ribosomal protein bL9 family.

In terms of biological role, binds to the 23S rRNA. The chain is Large ribosomal subunit protein bL9 from Chlamydia felis (strain Fe/C-56) (Chlamydophila felis).